A 395-amino-acid chain; its full sequence is 8-amino-7-oxononanoate synthase (395 aa).

Arginine 24 provides a ligand contact to substrate. Residue 111 to 112 coordinates pyridoxal 5'-phosphate; it reads GF. Histidine 136 serves as a coordination point for substrate. Residues serine 184, 209–212, and 240–243 contribute to the pyridoxal 5'-phosphate site; these read DDAH and TLSK. Lysine 243 is modified (N6-(pyridoxal phosphate)lysine). Threonine 357 is a binding site for substrate.

Belongs to the class-II pyridoxal-phosphate-dependent aminotransferase family. BioF subfamily. Homodimer. Requires pyridoxal 5'-phosphate as cofactor.

It catalyses the reaction 6-carboxyhexanoyl-[ACP] + L-alanine + H(+) = (8S)-8-amino-7-oxononanoate + holo-[ACP] + CO2. It participates in cofactor biosynthesis; biotin biosynthesis. Its function is as follows. Catalyzes the decarboxylative condensation of pimeloyl-[acyl-carrier protein] and L-alanine to produce 8-amino-7-oxononanoate (AON), [acyl-carrier protein], and carbon dioxide. The sequence is that of 8-amino-7-oxononanoate synthase from Alkaliphilus oremlandii (strain OhILAs) (Clostridium oremlandii (strain OhILAs)).